The chain runs to 312 residues: MIEFEKPIITKIDENKDYGRFVIEPLERGYGTTLGNSLRRVLLSSLPGAAVTSIKIDGVLHEFDTIPGVREDVMQIILNVKGLAVKSYVEDEKIIELDVEGPAEITAGDILTDSDIEIVNPDHYLFTIAEGHSLKATMTVAKNRGYVPAEGNKKDDVPVGTLAVDSIYTPVKKVNYQVEPARVGSNDGFDKLTIEIMTNGTIIPEDALGLSARVLIEHLNLFTDLTEVAKATEVMKETEKVNDEKVLDRTIEELDLSVRSYNCLKRAGINTVFDLTEKTEPEMMKVRNLGRKSLEEVKIKLADLGLGLKNDK.

An alpha N-terminal domain (alpha-NTD) region spans residues 1–226; that stretch reads MIEFEKPIIT…EHLNLFTDLT (226 aa). The segment at 242–312 is alpha C-terminal domain (alpha-CTD); that stretch reads NDEKVLDRTI…DLGLGLKNDK (71 aa).

Belongs to the RNA polymerase alpha chain family. In terms of assembly, homodimer. The RNAP catalytic core consists of 2 alpha, 1 beta, 1 beta' and 1 omega subunit. When a sigma factor is associated with the core the holoenzyme is formed, which can initiate transcription.

The catalysed reaction is RNA(n) + a ribonucleoside 5'-triphosphate = RNA(n+1) + diphosphate. Its function is as follows. DNA-dependent RNA polymerase catalyzes the transcription of DNA into RNA using the four ribonucleoside triphosphates as substrates. The polypeptide is DNA-directed RNA polymerase subunit alpha (Streptococcus agalactiae serotype Ia (strain ATCC 27591 / A909 / CDC SS700)).